Consider the following 362-residue polypeptide: Putative HLA class I histocompatibility antigen, alpha chain H (362 aa).

Residues 1–24 form the signal peptide; that stretch reads MVLMAPRTLLLLLSGALALTQTWA. Positions 25–114 are alpha-1; it reads RSHSMRYFYT…ALRYYNQSEG (90 aa). The Extracellular segment spans residues 25–308; sequence RSHSMRYFYT…EPSSQPTVPI (284 aa). N-linked (GlcNAc...) asparagine glycosylation is present at N110. The tract at residues 115-206 is alpha-2; it reads GSHTMQVMYG…ENGKETLQRA (92 aa). Residues 207–298 form an alpha-3 region; the sequence is DPPKTHMTHH…GLPEPLTLRW (92 aa). The region spanning 209 to 297 is the Ig-like C1-type domain; sequence PKTHMTHHPI…EGLPEPLTLR (89 aa). A disulfide bridge links C227 with C283. Residues 299-308 form a connecting peptide region; it reads EPSSQPTVPI. Residues 309 to 332 traverse the membrane as a helical segment; the sequence is VGIVAGLVLLVAVVTGAVVAAVMW. At 333-362 the chain is on the cytoplasmic side; it reads RKKSSDRKGGSYSQAASSNSAQGSDVSLTA. The tract at residues 337–362 is disordered; sequence SDRKGGSYSQAASSNSAQGSDVSLTA. Low complexity predominate over residues 342–356; that stretch reads GSYSQAASSNSAQGS.

The protein belongs to the MHC class I family. Heterodimer of an alpha chain and a beta chain (beta-2-microglobulin).

It is found in the cell membrane. Involved in the presentation of foreign antigens to the immune system. The protein is Putative HLA class I histocompatibility antigen, alpha chain H (HLA-H) of Homo sapiens (Human).